We begin with the raw amino-acid sequence, 793 residues long: Splicing factor 3A subunit 1 (793 aa).

The segment at 1-42 (MPAGPVQAVPPPPPAATEPKQPTEEEASSKEDSTPSKPVVGI) is disordered. A Glycyl lysine isopeptide (Lys-Gly) (interchain with G-Cter in SUMO2) cross-link involves residue lysine 20. The span at 21 to 34 (QPTEEEASSKEDST) shows a compositional bias: basic and acidic residues. Residues 52 to 94 (IVDKTASFVARNGPEFEARIRQNEINNPKFNFLNPNDPYHAYY) form an SURP motif 1 repeat. The residue at position 55 (lysine 55) is an N6-acetyllysine. Residue lysine 131 forms a Glycyl lysine isopeptide (Lys-Gly) (interchain with G-Cter in SUMO2) linkage. The stretch at 166–208 (VVKLTAQFVARNGRQFLTQLMQKEQRNYQFDFLRPQHSLFNYF) is one SURP motif 2 repeat. Residues 318 to 412 (GESEEVEMEV…PAPAPDEYLV (95 aa)) are disordered. Phosphoserine is present on residues serine 320, serine 329, and serine 359. 2 stretches are compositionally biased toward acidic residues: residues 320 to 334 (SEEV…EEDE) and 354 to 364 (DMDEGSDDEEE). Pro residues predominate over residues 368–384 (VPPPPETPMPPPLPPTP). Over residues 388-397 (IVRKDYDPKA) the composition is skewed to basic and acidic residues. At serine 413 the chain carries Phosphoserine. Lysine 424 participates in a covalent cross-link: Glycyl lysine isopeptide (Lys-Gly) (interchain with G-Cter in SUMO2). Serine 451 is modified (phosphoserine). Tyrosine 456 bears the Phosphotyrosine mark. Over residues 488–502 (IGEEEIQKPEEKVTW) the composition is skewed to basic and acidic residues. 3 disordered regions span residues 488–518 (IGEE…AAQA), 530–584 (HKAK…AMPP), and 666–685 (PMPP…SKKL). Residue lysine 499 forms a Glycyl lysine isopeptide (Lys-Gly) (interchain with G-Cter in SUMO2) linkage. Serine 508 is subject to Phosphoserine. The segment covering 509-518 (MARTQQAAQA) has biased composition (polar residues). Residue lysine 542 forms a Glycyl lysine isopeptide (Lys-Gly) (interchain with G-Cter in SUMO2) linkage. Positions 563–572 (ATNIPSSAPP) are enriched in polar residues. The span at 666 to 675 (PMPPVHPPPP) shows a compositional bias: pro residues. A required and sufficient for nuclear import region spans residues 680 to 702 (PASKKLKTEDSLMPEEEFLRRNK). Residue lysine 686 forms a Glycyl lysine isopeptide (Lys-Gly) (interchain with G-Cter in SUMO2) linkage. Residues 707 to 793 (IKVQVPNMQD…ALKERGGRKK (87 aa)) enclose the Ubiquitin-like domain. A Phosphotyrosine modification is found at tyrosine 759.

In terms of assembly, component of the 17S U2 SnRNP complex, a ribonucleoprotein complex that contains small nuclear RNA (snRNA) U2 and a number of specific proteins. Part of the SF3A subcomplex of the 17S U2 SnRNP complex which is composed of three subunits; SF3A3/SAP61, SF3A2/SAP62 and SF3A1/SAP114. SF3A associates with the splicing factor SF3B and a 12S RNA unit to form the mature 17S U2 small nuclear ribonucleoprotein complex (17S U2 snRNP). SF3A1 functions as a scaffold that interacts directly with both SF3A2 and SF3A3. Identified in the spliceosome 'E' complex, a precursor of the spliceosome 'A' complex. Identified in the spliceosome 'A' and 'B' complexes. Identified in the spliceosome 'C' complex. Interacts with P2RX6; resulting in a reduction of the splicing activity.

It localises to the nucleus. The protein resides in the nucleus speckle. Its function is as follows. Component of the 17S U2 SnRNP complex of the spliceosome, a large ribonucleoprotein complex that removes introns from transcribed pre-mRNAs. The 17S U2 SnRNP complex (1) directly participates in early spliceosome assembly and (2) mediates recognition of the intron branch site during pre-mRNA splicing by promoting the selection of the pre-mRNA branch-site adenosine, the nucleophile for the first step of splicing. Within the 17S U2 SnRNP complex, SF3A1 is part of the SF3A subcomplex that contributes to the assembly of the 17S U2 snRNP, and the subsequent assembly of the pre-spliceosome 'E' complex and the pre-catalytic spliceosome 'A' complex. Involved in pre-mRNA splicing as a component of pre-catalytic spliceosome 'B' complexes. The polypeptide is Splicing factor 3A subunit 1 (SF3A1) (Bos taurus (Bovine)).